Consider the following 246-residue polypeptide: MKTVAIIAASGVGKRMKLDGGMSKQMIEIGGHTVIWHTMKAFQDAESVDAVYIATKSDSIEPFKQLARENGFTKIHSIIEGGKERQDSIRNCMDLIEEEIESSGVMPDAILVHDGARPFIQPEEIDEIARISAEHGACVPATKPKDTIKYIGRTPEVFGETLDRSRLLQVQTPQGFTPAKLIEAHRKAASDGVYATDDAALVERYFPEQEIHVYEMGYHNIKITTPEDVPVGEAILAGLKARKSEN.

Belongs to the IspD/TarI cytidylyltransferase family. IspD subfamily.

The catalysed reaction is 2-C-methyl-D-erythritol 4-phosphate + CTP + H(+) = 4-CDP-2-C-methyl-D-erythritol + diphosphate. It functions in the pathway isoprenoid biosynthesis; isopentenyl diphosphate biosynthesis via DXP pathway; isopentenyl diphosphate from 1-deoxy-D-xylulose 5-phosphate: step 2/6. In terms of biological role, catalyzes the formation of 4-diphosphocytidyl-2-C-methyl-D-erythritol from CTP and 2-C-methyl-D-erythritol 4-phosphate (MEP). This Chlorobaculum parvum (strain DSM 263 / NCIMB 8327) (Chlorobium vibrioforme subsp. thiosulfatophilum) protein is 2-C-methyl-D-erythritol 4-phosphate cytidylyltransferase.